A 199-amino-acid chain; its full sequence is 3-isopropylmalate dehydratase small subunit (199 aa).

Belongs to the LeuD family. LeuD type 1 subfamily. Heterodimer of LeuC and LeuD.

The catalysed reaction is (2R,3S)-3-isopropylmalate = (2S)-2-isopropylmalate. Its pathway is amino-acid biosynthesis; L-leucine biosynthesis; L-leucine from 3-methyl-2-oxobutanoate: step 2/4. Its function is as follows. Catalyzes the isomerization between 2-isopropylmalate and 3-isopropylmalate, via the formation of 2-isopropylmaleate. This Aeromonas salmonicida (strain A449) protein is 3-isopropylmalate dehydratase small subunit.